A 288-amino-acid polypeptide reads, in one-letter code: Homoserine kinase (288 aa).

78 to 88 lines the ATP pocket; sequence PLARGLGSSSS.

This sequence belongs to the GHMP kinase family. Homoserine kinase subfamily.

Its subcellular location is the cytoplasm. The enzyme catalyses L-homoserine + ATP = O-phospho-L-homoserine + ADP + H(+). It participates in amino-acid biosynthesis; L-threonine biosynthesis; L-threonine from L-aspartate: step 4/5. Functionally, catalyzes the ATP-dependent phosphorylation of L-homoserine to L-homoserine phosphate. The sequence is that of Homoserine kinase from Streptococcus mutans serotype c (strain ATCC 700610 / UA159).